A 492-amino-acid chain; its full sequence is N-succinylglutamate 5-semialdehyde dehydrogenase (492 aa).

220-225 (GSASTG) serves as a coordination point for NAD(+). Active-site residues include Glu243 and Cys277.

Belongs to the aldehyde dehydrogenase family. AstD subfamily.

It carries out the reaction N-succinyl-L-glutamate 5-semialdehyde + NAD(+) + H2O = N-succinyl-L-glutamate + NADH + 2 H(+). It functions in the pathway amino-acid degradation; L-arginine degradation via AST pathway; L-glutamate and succinate from L-arginine: step 4/5. In terms of biological role, catalyzes the NAD-dependent reduction of succinylglutamate semialdehyde into succinylglutamate. This is N-succinylglutamate 5-semialdehyde dehydrogenase from Salmonella paratyphi C (strain RKS4594).